The sequence spans 517 residues: Glucans biosynthesis protein G (517 aa).

The first 28 residues, 1–28 (MKHKLQMMKMRWLSAAVMLTLYTSSSWA), serve as a signal peptide directing secretion.

The protein belongs to the OpgD/OpgG family.

The protein localises to the periplasm. Its pathway is glycan metabolism; osmoregulated periplasmic glucan (OPG) biosynthesis. Its function is as follows. Involved in the biosynthesis of osmoregulated periplasmic glucans (OPGs). The protein is Glucans biosynthesis protein G of Escherichia coli O1:K1 / APEC.